A 183-amino-acid polypeptide reads, in one-letter code: BLOC-1-related complex subunit 8 homolog (183 aa).

The segment at 152–183 is disordered; sequence MIGPGTATGRTEAQAATSSNPGELQRSYTTLH. Polar residues predominate over residues 159 to 183; the sequence is TGRTEAQAATSSNPGELQRSYTTLH.

The protein belongs to the BORCS8 family.

It localises to the lysosome membrane. May participate in the coupling of lysosomes to microtubule plus-end-directed kinesin motor. In Drosophila melanogaster (Fruit fly), this protein is BLOC-1-related complex subunit 8 homolog.